Reading from the N-terminus, the 2155-residue chain is Conidial pigment polyketide synthase PfmaE (2155 aa).

Residues 8 to 245 are N-terminal acylcarrier protein transacylase domain (SAT); the sequence is LLFGDQSLDT…TAIPVYGPYH (238 aa). Positions 381–813 constitute a Ketosynthase family 3 (KS3) domain; the sequence is KCKLAIVGMA…GGNTGLLLED (433 aa). Residues C553, H688, and H731 each act as for beta-ketoacyl synthase activity in the active site. Residues 910-1231 form a malonyl-CoA:ACP transacylase (MAT) domain region; the sequence is AFMFTGQGSH…LCTLHSAGLN (322 aa). S1001 acts as the For acyl/malonyl transferase activity in catalysis. The product template (PT) domain stretch occupies residues 1293 to 1608; sequence TTTVQKVVRE…PRKVLNVVLP (316 aa). Positions 1297 to 1428 are N-terminal hotdog fold; it reads QKVVREEVKG…CKVFFGDNEE (132 aa). One can recognise a PKS/mFAS DH domain in the interval 1297–1604; sequence QKVVREEVKG…FQAIPRKVLN (308 aa). The active-site Proton acceptor; for dehydratase activity is the H1329. The C-terminal hotdog fold stretch occupies residues 1455–1604; sequence DASKIGRGLA…FQAIPRKVLN (150 aa). D1516 (proton donor; for dehydratase activity) is an active-site residue. Carrier domains are found at residues 1653–1730 and 1779–1856; these read LTKN…AQFE and GNVS…GIED. S1690 carries the post-translational modification O-(pantetheine 4'-phosphoryl)serine. Positions 1738–1782 are disordered; the sequence is EENAHSSASSDSADMETESNFTTPSDDSEKDEVKGDAPAADGNVS. O-(pantetheine 4'-phosphoryl)serine is present on S1816. Residues 1855–1892 are disordered; sequence EDKPKRAAPKSAKQEPAKPEPKVQGEAKAHTNPVDNYP. The span at 1866-1883 shows a compositional bias: basic and acidic residues; the sequence is AKQEPAKPEPKVQGEAKA. Positions 1911–2041 are thioesterase (TE) domain; sequence QLFMIPDGSG…LGEGDDAEAK (131 aa).

It participates in pigment biosynthesis; melanin biosynthesis. In terms of biological role, non-reducing polyketide synthase; part of the gene cluster that mediates the biosynthesis of dihydroxynaphthalene (DHN)-melanin, a bluish-green pigment forming a dark layer in the conidial wall that protects the conidia from UV radiations. The first step of the pathway is the production of the pentaketide 1,3,6,8-tetrahydroxynaphthalene (1,3,6,8-THN or T4HN) by the polyketide synthase PfmaE though condensation of acetyl-CoA with malonyl-CoA. T4HN is not stable and easily oxidizes into the stable form flaviolin. T4HN is also substrate of the hydroxynaphthalene reductase PfmaG to yield scytalone. The scytalone dehydratase PfmaJ then reduces scytalone to 1,3,8-THN. 1,3,8-THN is then substrate of the hydroxynaphthalene reductase PfmaI to yield vermelone. Vermelone is further converted by the multicopper oxidase PfmaD to 1,8-DHN. Finally the laccase PFICI_06862 transforms 1,8-DHN to DHN-melanin. The roles of the 5-oxoprolinase PfmaA and the proline iminopeptidase PfmaB within the cluster have not been elucidated yet. This chain is Conidial pigment polyketide synthase PfmaE, found in Pestalotiopsis fici (strain W106-1 / CGMCC3.15140).